The chain runs to 412 residues: Yellow-related salivary protein LJM17 (412 aa).

The first 18 residues, 1–18 (MRFFFVFLAIVLFQGIHG), serve as a signal peptide directing secretion. N-linked (GlcNAc...) asparagine glycosylation is present at Asn29.

This sequence belongs to the major royal jelly protein family. Salivary gland.

Its subcellular location is the secreted. Its function is as follows. Probably modulates blood feeding of sand flies on vertebrate species by binding and sequestering different mediators involved in the host response. Binds biogenic amines. Binds serotonin with high affinity. Binds noradrenaline but not adrenaline. Binds dopamine and octopamine. Binds histamine. Inhibits host smooth muscle contraction induced by histamine in bioassay with guinea pig ileum. Immunogenic; elicits antibody production in the host. Functions as a chemoattractant for host neutrophils; likely acts through a G-protein-coupled receptor and effect is dependent on calcium influx. The polypeptide is Yellow-related salivary protein LJM17 (Lutzomyia longipalpis (Sand fly)).